We begin with the raw amino-acid sequence, 816 residues long: MGDTVVEPAPLKPTSEPTSGPPGNNGGSLLSVITEGVGELSVIDPEVAQKACQDVLEKVKLLHGGMAVSSKGAPLELVNGDGVDSEIRCLDDPPAQIREEEDEMGATVASGTAKGARRRRQNNSAKQSWLLRLFESKLFDISMAISYLYNSKEPGVQAYIGNRLFCFRNEDVDFYLPQLLNMYIHMDEDVGDAIKPYIVYRCRQSINFSLQCALLLGAYSSDMHISTQRHSRGTKLRKLILSDELKPAHRKRELPSLSPAPDTGLSPSKRTHQRSKSDATASISLSSNLKRTASNPKVENEDEELSSSTESIDNSFSSPVRLAPEREFIKSLMAIGKRLATLPTKEQKTQRLISELSLLNHKLPARVWLPTAGFDHHVVRVPHTQAVVLNSKDKAPYLIYVEVLECENFDTTSVPARIPENRIRSTRSVENLPECGITHEQRAGSFSTVPNYDNDDEAWSVDDIGELQVELPEVHTNSCDNISQFSVDSITSQESKEPVFIAAGDIRRRLSEQLAHTPTAFKRDPEDPSAVALKEPWQEKVRRIREGSPYGHLPNWRLLSVIVKCGDDLRQELLAFQVLKQLQSIWEQERVPLWIKPYKILVISADSGMIEPVVNAVSIHQVKKQSQLSLLDYFLQEHGSYTTEAFLSAQRNFVQSCAGYCLVCYLLQVKDRHNGNILLDAEGHIIHIDFGFILSSSPRNLGFETSAFKLTTEFVDVMGGLDGDMFNYYKMLMLQGLIAARKHMDKVVQIVEIMQQGSQLPCFHGSSTIRNLKERFHMSMTEEQLQLLVEQMVDGSMRSITTKLYDGFQYLTNGIM.

Disordered stretches follow at residues 1-30, 101-120, and 248-318; these read MGDT…GSLL, EDEM…RRRR, and AHRK…SFSS. Gly-2 is subject to N-acetylglycine. Residues 2–68 form an interaction with ACBD3 region; the sequence is GDTVVEPAPL…VKLLHGGMAV (67 aa). The PIK helical domain maps to 52–242; it reads CQDVLEKVKL…GTKLRKLILS (191 aa). Ser-258 is modified (phosphoserine). Phosphothreonine is present on Thr-263. Phosphoserine occurs at positions 266, 275, 277, 284, and 294. Composition is skewed to polar residues over residues 278–297 and 306–318; these read DATA…SNPK and SSST…SFSS. At Ser-428 the chain carries Phosphoserine. Phosphothreonine is present on Thr-438. Ser-511 carries the post-translational modification Phosphoserine. Phosphothreonine is present on residues Thr-517 and Thr-519. Positions 535 to 801 constitute a PI3K/PI4K catalytic domain; sequence EPWQEKVRRI…MVDGSMRSIT (267 aa). A G-loop region spans residues 541 to 547; that stretch reads VRRIREG. Residues 668 to 676 are catalytic loop; sequence QVKDRHNGN. Residues 687-711 form an activation loop region; it reads HIDFGFILSSSPRNLGFETSAFKLT.

The protein belongs to the PI3/PI4-kinase family. Type III PI4K subfamily. In terms of assembly, interacts with ARF1 and ARF3 in the Golgi complex, but not with ARF4, ARF5 or ARF6. Interacts with NCS1/FREQ in a calcium-independent manner. Interacts with CALN1/CABP8 and CALN2/CABP7; in a calcium-dependent manner; this interaction competes with NCS1/FREQ binding. Interacts with ACBD3. Interacts with ARMH3, YWHAB, YWHAE, YWHAG, YWHAH, YWHAQ, YWHAZ and SFN. Interacts with GGA2 (via VHS domain); the interaction is important for PI4KB location at the Golgi apparatus membrane. Interacts with ATG9A. It depends on Mg(2+) as a cofactor. Mn(2+) is required as a cofactor.

The protein resides in the endomembrane system. It localises to the mitochondrion outer membrane. Its subcellular location is the rough endoplasmic reticulum membrane. It is found in the golgi apparatus. The protein localises to the golgi apparatus membrane. The enzyme catalyses a 1,2-diacyl-sn-glycero-3-phospho-(1D-myo-inositol) + ATP = a 1,2-diacyl-sn-glycero-3-phospho-(1D-myo-inositol 4-phosphate) + ADP + H(+). Inhibited by wortmannin. Increased kinase activity upon interaction with NCS1/FREQ. In terms of biological role, phosphorylates phosphatidylinositol (PI) in the first committed step in the production of the second messenger inositol-1,4,5,-trisphosphate (PIP). May regulate Golgi disintegration/reorganization during mitosis, possibly via its phosphorylation. Involved in Golgi-to-plasma membrane trafficking. This is Phosphatidylinositol 4-kinase beta (PI4KB) from Plecturocebus moloch (Dusky titi monkey).